The following is a 204-amino-acid chain: Linker for activation of T-cells family member 2 (204 aa).

The Extracellular segment spans residues 1 to 7; the sequence is MNAELEL. A helical; Signal-anchor for type III membrane protein transmembrane segment spans residues 8–28; that stretch reads LWPLSGLLLLLLLGTTAWLCV. S-palmitoyl cysteine attachment occurs at residues C27 and C30. Over 29–204 the chain is Cytoplasmic; sequence QCSRPGVKRN…NGDVATTEKI (176 aa). Y60 is modified (phosphotyrosine). Residues S61 and S96 each carry the phosphoserine modification. Residues Y140, Y161, and Y193 each carry the phosphotyrosine modification. The interval 147 to 204 is disordered; it reads KPSTPESGTEESEDYQNSVSILQWRESKRTMGARTSPSGSPDEEPDYVNGDVATTEKI.

When phosphorylated, interacts with GRB2. May also interact with SOS1, GAB1 and CBL. Post-translationally, phosphorylated on tyrosines following cross-linking of BCR in B-cells, high affinity IgG receptor (FCGR1) in myeloid cells, or high affinity IgE receptor (FCER1) in mast cells; which induces the recruitment of GRB2.

It is found in the cell membrane. Its function is as follows. Involved in FCER1 (high affinity immunoglobulin epsilon receptor)-mediated signaling in mast cells. May also be involved in BCR (B-cell antigen receptor)-mediated signaling in B-cells and FCGR1 (high affinity immunoglobulin gamma Fc receptor I)-mediated signaling in myeloid cells. Couples activation of these receptors and their associated kinases with distal intracellular events through the recruitment of GRB2. This chain is Linker for activation of T-cells family member 2 (Lat2), found in Rattus norvegicus (Rat).